The following is a 56-amino-acid chain: Large ribosomal subunit protein bL32 (56 aa).

It belongs to the bacterial ribosomal protein bL32 family.

This Bacillus cereus (strain ATCC 14579 / DSM 31 / CCUG 7414 / JCM 2152 / NBRC 15305 / NCIMB 9373 / NCTC 2599 / NRRL B-3711) protein is Large ribosomal subunit protein bL32.